We begin with the raw amino-acid sequence, 259 residues long: Small ribosomal subunit protein uS2 (259 aa).

It belongs to the universal ribosomal protein uS2 family.

The polypeptide is Small ribosomal subunit protein uS2 (Streptococcus pneumoniae (strain Hungary19A-6)).